Consider the following 292-residue polypeptide: NAD kinase (292 aa).

The active-site Proton acceptor is the aspartate 73. Residues 73–74 (DG), 147–148 (NE), histidine 158, arginine 175, aspartate 177, 188–193 (TAYSLS), and glutamine 247 contribute to the NAD(+) site.

Belongs to the NAD kinase family. The cofactor is a divalent metal cation.

The protein localises to the cytoplasm. The enzyme catalyses NAD(+) + ATP = ADP + NADP(+) + H(+). In terms of biological role, involved in the regulation of the intracellular balance of NAD and NADP, and is a key enzyme in the biosynthesis of NADP. Catalyzes specifically the phosphorylation on 2'-hydroxyl of the adenosine moiety of NAD to yield NADP. The chain is NAD kinase from Pectobacterium atrosepticum (strain SCRI 1043 / ATCC BAA-672) (Erwinia carotovora subsp. atroseptica).